A 133-amino-acid chain; its full sequence is Small ribosomal subunit protein uS8 (133 aa).

Belongs to the universal ribosomal protein uS8 family. Part of the 30S ribosomal subunit. Contacts proteins S5 and S12.

In terms of biological role, one of the primary rRNA binding proteins, it binds directly to 16S rRNA central domain where it helps coordinate assembly of the platform of the 30S subunit. This chain is Small ribosomal subunit protein uS8, found in Protochlamydia amoebophila (strain UWE25).